A 536-amino-acid chain; its full sequence is uncharacterized protein (536 aa).

At 1-8 (MVSIKRYE) the chain is on the cytoplasmic side. Residues 9 to 29 (IISFVIAAFFFLSGLSMWIAF) traverse the membrane as a helical segment. The Extracellular portion of the chain corresponds to 30–502 (WPIFNSELRS…VWLGVIIVPR (473 aa)). N-linked (GlcNAc...) asparagine glycans are attached at residues asparagine 73, asparagine 236, asparagine 363, and asparagine 376. Residues 503–523 (IIEYLKFVLIFISICILTTLL) traverse the membrane as a helical segment. The Cytoplasmic portion of the chain corresponds to 524–536 (VIRVRVKGTVSVV).

Belongs to the CD36 family.

Its subcellular location is the membrane. This is an uncharacterized protein from Caenorhabditis elegans.